Consider the following 66-residue polypeptide: U-scoloptoxin(24)-Er2a (66 aa).

Positions 1–23 are cleaved as a signal peptide; it reads MVKPLHCLIGIVLFLAVLNAGNG. A disordered region spans residues 43-66; sequence SLFHGNQRKKRSEEKRFSDMEQTK. The segment covering 53 to 66 has biased composition (basic and acidic residues); sequence RSEEKRFSDMEQTK.

Belongs to the scoloptoxin-24 family. Expressed by the venom gland.

It localises to the secreted. In Ethmostigmus rubripes (Giant centipede), this protein is U-scoloptoxin(24)-Er2a.